The sequence spans 455 residues: Inactive peptidyl-prolyl cis-trans isomerase shutdown (455 aa).

Positions serine 34–aspartate 54 are disordered. Residues leucine 44–aspartate 54 show a composition bias toward acidic residues. The 90-residue stretch at lysine 103–serine 192 folds into the PPIase FKBP-type domain. TPR repeat units follow at residues alanine 218–cysteine 251 and cysteine 303–asparagine 336.

Belongs to the FKBP6 family. As to quaternary structure, interacts with Hsp83. In terms of tissue distribution, strongly expressed in the germline stem cells and in 16-cell cysts. Present in the germ cells throughout embryogenesis. Defects are due to derepression of transposable elements and impaired piRNA biogenesis.

It localises to the cytoplasm. It is found in the cytoplasmic ribonucleoprotein granule. Its function is as follows. Co-chaperone required during oogenesis to repress transposable elements and prevent their mobilization, which is essential for the germline integrity. Acts via the piRNA metabolic process, which mediates the repression of transposable elements during meiosis by forming complexes composed of piRNAs and Piwi proteins and govern the methylation and subsequent repression of transposons. Acts as a co-chaperone via its interaction with Hsp83/HSP90 and is required for the biogenesis of all three piRNA major populations. The protein is Inactive peptidyl-prolyl cis-trans isomerase shutdown of Drosophila melanogaster (Fruit fly).